The following is a 449-amino-acid chain: Sensor protein QseC (449 aa).

Residues 1-12 (MKLTQRLSLRVR) are Cytoplasmic-facing. The helical transmembrane segment at 13 to 33 (LTLIFLILVSITWAISSFVAW) threads the bilayer. Residues 34-161 (RKTTDNVDEL…REDMALAIVA (128 aa)) are Periplasmic-facing. Residues 162-182 (AQLTPWLIALPFMLLILLLLL) form a helical membrane-spanning segment. The region spanning 183 to 235 (HRELRPLKKLAQALRFRSPESETPLDAKGVPSEVRPLVEALNQLFSRIHSMMV) is the HAMP domain. The Cytoplasmic segment spans residues 183-449 (HRELRPLKKL…EGGFEAVVRW (267 aa)). The Histidine kinase domain occupies 243 to 449 (DAAHELRSPL…EGGFEAVVRW (207 aa)). His246 is modified (phosphohistidine; by autocatalysis).

The protein localises to the cell inner membrane. The catalysed reaction is ATP + protein L-histidine = ADP + protein N-phospho-L-histidine.. Member of a two-component regulatory system QseB/QseC. Activates the flagella regulon by activating transcription of FlhDC. May activate QseB by phosphorylation. The polypeptide is Sensor protein QseC (qseC) (Salmonella typhi).